Reading from the N-terminus, the 223-residue chain is Pyridoxine/pyridoxamine 5'-phosphate oxidase (223 aa).

Substrate is bound by residues 8–11 (RVDY) and K65. Residues 60–65 (RTVLLK), 75–76 (YT), R81, K82, and Q104 each bind FMN. 3 residues coordinate substrate: Y122, R126, and S130. Residues 139-140 (QS) and W188 contribute to the FMN site. 194–196 (RLH) contacts substrate. R198 serves as a coordination point for FMN.

The protein belongs to the pyridoxamine 5'-phosphate oxidase family. As to quaternary structure, homodimer. The cofactor is FMN.

The catalysed reaction is pyridoxamine 5'-phosphate + O2 + H2O = pyridoxal 5'-phosphate + H2O2 + NH4(+). It catalyses the reaction pyridoxine 5'-phosphate + O2 = pyridoxal 5'-phosphate + H2O2. It functions in the pathway cofactor metabolism; pyridoxal 5'-phosphate salvage; pyridoxal 5'-phosphate from pyridoxamine 5'-phosphate: step 1/1. The protein operates within cofactor metabolism; pyridoxal 5'-phosphate salvage; pyridoxal 5'-phosphate from pyridoxine 5'-phosphate: step 1/1. Catalyzes the oxidation of either pyridoxine 5'-phosphate (PNP) or pyridoxamine 5'-phosphate (PMP) into pyridoxal 5'-phosphate (PLP). In Kineococcus radiotolerans (strain ATCC BAA-149 / DSM 14245 / SRS30216), this protein is Pyridoxine/pyridoxamine 5'-phosphate oxidase.